Consider the following 188-residue polypeptide: dCTP deaminase (188 aa).

Residues 111-116, 135-137, Gln-156, Tyr-170, Lys-179, and Gln-180 each bind dCTP; these read KSTYAR and TLE. The active-site Proton donor/acceptor is the Glu-137.

It belongs to the dCTP deaminase family. In terms of assembly, homotrimer.

It carries out the reaction dCTP + H2O + H(+) = dUTP + NH4(+). It functions in the pathway pyrimidine metabolism; dUMP biosynthesis; dUMP from dCTP (dUTP route): step 1/2. Catalyzes the deamination of dCTP to dUTP. This is dCTP deaminase from Orientia tsutsugamushi (strain Boryong) (Rickettsia tsutsugamushi).